Reading from the N-terminus, the 272-residue chain is Putative pyruvate, phosphate dikinase regulatory protein 2 (272 aa).

154-161 (GVSRTSKT) serves as a coordination point for ADP.

The protein belongs to the pyruvate, phosphate/water dikinase regulatory protein family. PDRP subfamily.

It catalyses the reaction N(tele)-phospho-L-histidyl/L-threonyl-[pyruvate, phosphate dikinase] + ADP = N(tele)-phospho-L-histidyl/O-phospho-L-threonyl-[pyruvate, phosphate dikinase] + AMP + H(+). It carries out the reaction N(tele)-phospho-L-histidyl/O-phospho-L-threonyl-[pyruvate, phosphate dikinase] + phosphate + H(+) = N(tele)-phospho-L-histidyl/L-threonyl-[pyruvate, phosphate dikinase] + diphosphate. In terms of biological role, bifunctional serine/threonine kinase and phosphorylase involved in the regulation of the pyruvate, phosphate dikinase (PPDK) by catalyzing its phosphorylation/dephosphorylation. The polypeptide is Putative pyruvate, phosphate dikinase regulatory protein 2 (Staphylococcus epidermidis (strain ATCC 35984 / DSM 28319 / BCRC 17069 / CCUG 31568 / BM 3577 / RP62A)).